The chain runs to 196 residues: Holliday junction branch migration complex subunit RuvA (196 aa).

The tract at residues 1-63 (MISFVSGRVA…EDSLTLYGFA (63 aa)) is domain I. The domain II stretch occupies residues 64 to 136 (DDDERTVFEL…LKDRLGTPST (73 aa)). The flexible linker stretch occupies residues 136–140 (TAAAE). The interval 141–196 (STSGWRDAVHAGLLNLGYTARQADEAIAAIAGELDDSAAVDTATALRLALATLKRP) is domain III.

This sequence belongs to the RuvA family. Homotetramer. Forms an RuvA(8)-RuvB(12)-Holliday junction (HJ) complex. HJ DNA is sandwiched between 2 RuvA tetramers; dsDNA enters through RuvA and exits via RuvB. An RuvB hexamer assembles on each DNA strand where it exits the tetramer. Each RuvB hexamer is contacted by two RuvA subunits (via domain III) on 2 adjacent RuvB subunits; this complex drives branch migration. In the full resolvosome a probable DNA-RuvA(4)-RuvB(12)-RuvC(2) complex forms which resolves the HJ.

Its subcellular location is the cytoplasm. Its function is as follows. The RuvA-RuvB-RuvC complex processes Holliday junction (HJ) DNA during genetic recombination and DNA repair, while the RuvA-RuvB complex plays an important role in the rescue of blocked DNA replication forks via replication fork reversal (RFR). RuvA specifically binds to HJ cruciform DNA, conferring on it an open structure. The RuvB hexamer acts as an ATP-dependent pump, pulling dsDNA into and through the RuvAB complex. HJ branch migration allows RuvC to scan DNA until it finds its consensus sequence, where it cleaves and resolves the cruciform DNA. This chain is Holliday junction branch migration complex subunit RuvA, found in Acidothermus cellulolyticus (strain ATCC 43068 / DSM 8971 / 11B).